The chain runs to 347 residues: Quinolinate synthase (347 aa).

Iminosuccinate-binding residues include His47 and Ser68. Cys113 serves as a coordination point for [4Fe-4S] cluster. Residues 139-141 (YAN) and Ser156 each bind iminosuccinate. Cys200 serves as a coordination point for [4Fe-4S] cluster. Iminosuccinate contacts are provided by residues 226 to 228 (HPE) and Thr243. Residue Cys297 participates in [4Fe-4S] cluster binding.

The protein belongs to the quinolinate synthase family. Type 1 subfamily. [4Fe-4S] cluster is required as a cofactor.

It is found in the cytoplasm. It carries out the reaction iminosuccinate + dihydroxyacetone phosphate = quinolinate + phosphate + 2 H2O + H(+). It functions in the pathway cofactor biosynthesis; NAD(+) biosynthesis; quinolinate from iminoaspartate: step 1/1. Catalyzes the condensation of iminoaspartate with dihydroxyacetone phosphate to form quinolinate. This is Quinolinate synthase from Shigella boydii serotype 18 (strain CDC 3083-94 / BS512).